The sequence spans 254 residues: Receptor expression-enhancing protein 2 (254 aa).

2 helical membrane-spanning segments follow: residues 1 to 21 (MVSW…YPAY) and 35 to 55 (YVKW…ETLT). Serine 152 bears the Phosphoserine mark. The interval 164–254 (ALPLQGPDGR…KKTSAGGDSA (91 aa)) is disordered. The span at 195 to 204 (SVRSGTNQAD) shows a compositional bias: polar residues. The segment covering 205–219 (PRTEISEDDTGDKAP) has biased composition (basic and acidic residues).

The protein belongs to the DP1 family. As to quaternary structure, interacts with odorant receptor proteins.

It localises to the membrane. Functionally, required for endoplasmic reticulum (ER) network formation, shaping and remodeling. May enhance the cell surface expression of odorant receptors. The protein is Receptor expression-enhancing protein 2 (REEP2) of Bos taurus (Bovine).